We begin with the raw amino-acid sequence, 268 residues long: Aliphatic sulfonates import ATP-binding protein SsuB 2 (268 aa).

Residues 15–236 (LAVRKLQKTF…VRGSHRLAAL (222 aa)) form the ABC transporter domain. Residue 47-54 (GRSGCGKS) coordinates ATP.

The protein belongs to the ABC transporter superfamily. Aliphatic sulfonates importer (TC 3.A.1.17.2) family. As to quaternary structure, the complex is composed of two ATP-binding proteins (SsuB), two transmembrane proteins (SsuC) and a solute-binding protein (SsuA).

It localises to the cell inner membrane. It catalyses the reaction ATP + H2O + aliphatic sulfonate-[sulfonate-binding protein]Side 1 = ADP + phosphate + aliphatic sulfonateSide 2 + [sulfonate-binding protein]Side 1.. In terms of biological role, part of the ABC transporter complex SsuABC involved in aliphatic sulfonates import. Responsible for energy coupling to the transport system. The protein is Aliphatic sulfonates import ATP-binding protein SsuB 2 of Pseudomonas fluorescens (strain ATCC BAA-477 / NRRL B-23932 / Pf-5).